Reading from the N-terminus, the 317-residue chain is tRNA pseudouridine synthase B (317 aa).

Aspartate 47 (nucleophile) is an active-site residue.

This sequence belongs to the pseudouridine synthase TruB family. Type 1 subfamily.

The enzyme catalyses uridine(55) in tRNA = pseudouridine(55) in tRNA. In terms of biological role, responsible for synthesis of pseudouridine from uracil-55 in the psi GC loop of transfer RNAs. The polypeptide is tRNA pseudouridine synthase B (Shewanella denitrificans (strain OS217 / ATCC BAA-1090 / DSM 15013)).